The primary structure comprises 106 residues: DNA-directed RNA polymerase subunit Rpo6 (106 aa).

It belongs to the archaeal Rpo6/eukaryotic RPB6 RNA polymerase subunit family. Part of the RNA polymerase complex.

It localises to the cytoplasm. The catalysed reaction is RNA(n) + a ribonucleoside 5'-triphosphate = RNA(n+1) + diphosphate. DNA-dependent RNA polymerase (RNAP) catalyzes the transcription of DNA into RNA using the four ribonucleoside triphosphates as substrates. The chain is DNA-directed RNA polymerase subunit Rpo6 from Pyrobaculum aerophilum (strain ATCC 51768 / DSM 7523 / JCM 9630 / CIP 104966 / NBRC 100827 / IM2).